Reading from the N-terminus, the 436-residue chain is Adenylosuccinate synthetase (436 aa).

Residues 22-28 (GDEGKGK) and 50-52 (GHE) each bind GTP. Asp23 acts as the Proton acceptor in catalysis. Residues Asp23 and Gly50 each contribute to the Mg(2+) site. IMP contacts are provided by residues 23 to 26 (DEGK), 48 to 51 (NAGH), Thr141, Arg155, Asn231, Thr246, and Arg310. The Proton donor role is filled by His51. 306 to 312 (VSTARVR) lines the substrate pocket. GTP contacts are provided by residues Arg312, 338–340 (KMD), and 424–426 (GVG).

It belongs to the adenylosuccinate synthetase family. Homodimer. Mg(2+) is required as a cofactor.

Its subcellular location is the cytoplasm. The enzyme catalyses IMP + L-aspartate + GTP = N(6)-(1,2-dicarboxyethyl)-AMP + GDP + phosphate + 2 H(+). It participates in purine metabolism; AMP biosynthesis via de novo pathway; AMP from IMP: step 1/2. Functionally, plays an important role in the salvage pathway for purine nucleotide biosynthesis. Catalyzes the first committed step in the biosynthesis of AMP from IMP. This Babesia bovis protein is Adenylosuccinate synthetase.